The primary structure comprises 442 residues: UDP-N-acetylglucosamine 1-carboxyvinyltransferase (442 aa).

22 to 23 (KN) contributes to the phosphoenolpyruvate binding site. UDP-N-acetyl-alpha-D-glucosamine is bound at residue Arg-94. The Proton donor role is filled by Asp-119. Residues Asp-309 and Val-331 each coordinate UDP-N-acetyl-alpha-D-glucosamine.

Belongs to the EPSP synthase family. MurA subfamily.

The protein localises to the cytoplasm. It carries out the reaction phosphoenolpyruvate + UDP-N-acetyl-alpha-D-glucosamine = UDP-N-acetyl-3-O-(1-carboxyvinyl)-alpha-D-glucosamine + phosphate. Its pathway is cell wall biogenesis; peptidoglycan biosynthesis. In terms of biological role, cell wall formation. Adds enolpyruvyl to UDP-N-acetylglucosamine. In Chlamydia muridarum (strain MoPn / Nigg), this protein is UDP-N-acetylglucosamine 1-carboxyvinyltransferase.